We begin with the raw amino-acid sequence, 575 residues long: Malto-oligosyltrehalose trehalohydrolase (575 aa).

248-253 is a binding site for substrate; sequence RLDAVH. Aspartate 250 serves as the catalytic Nucleophile. The Proton donor role is filled by glutamate 287. Residues 312-316 and 381-386 contribute to the substrate site; these read DDVHH and HDQVGN.

It belongs to the glycosyl hydrolase 13 family.

It is found in the cytoplasm. The enzyme catalyses hydrolysis of (1-&gt;4)-alpha-D-glucosidic linkage in 4-alpha-D-[(1-&gt;4)-alpha-D-glucanosyl]n trehalose to yield trehalose and (1-&gt;4)-alpha-D-glucan.. Its pathway is glycan biosynthesis; trehalose biosynthesis. This Arthrobacter ramosus protein is Malto-oligosyltrehalose trehalohydrolase (treZ).